The primary structure comprises 155 residues: Secreted RxLR effector protein 38 (155 aa).

The N-terminal stretch at Met-1–Ala-17 is a signal peptide. Positions Arg-49 to Arg-64 match the RxLR-dEER motif.

Belongs to the RxLR effector family.

It localises to the secreted. The protein resides in the host nucleus. Its subcellular location is the host cytoplasm. Secreted effector that completely suppresses the host cell death induced by cell death-inducing proteins. The chain is Secreted RxLR effector protein 38 from Plasmopara viticola (Downy mildew of grapevine).